A 360-amino-acid polypeptide reads, in one-letter code: Photosystem II protein D1 (360 aa).

3 helical membrane-spanning segments follow: residues 29–46 (YVGWFGTLMIPTLLTATT), 118–133 (QFLIGIFCYMGRQWEL), and 142–156 (WICVAYSAPVSARTA). Position 126 (Tyr126) interacts with pheophytin a. The [CaMn4O5] cluster site is built by Asp170 and Glu189. A helical transmembrane segment spans residues 197–218 (FHMLGVAGVFGGSLFSAMHGSL). His198 is a chlorophyll a binding site. A quinone is bound by residues His215 and 264–265 (SF). Fe cation is bound at residue His215. His272 provides a ligand contact to Fe cation. Residues 274–288 (FLGAWPVIGIWFTAM) form a helical membrane-spanning segment. Residues His332, Glu333, Asp342, and Ala344 each contribute to the [CaMn4O5] cluster site. Positions 345–360 (SGEQAPVALTAPAING) are excised as a propeptide.

Belongs to the reaction center PufL/M/PsbA/D family. In terms of assembly, PSII is composed of 1 copy each of membrane proteins PsbA, PsbB, PsbC, PsbD, PsbE, PsbF, PsbH, PsbI, PsbJ, PsbK, PsbL, PsbM, PsbT, PsbX, PsbY, PsbZ, Psb30/Ycf12, peripheral proteins PsbO, CyanoQ (PsbQ), PsbU, PsbV and a large number of cofactors. It forms dimeric complexes. The cofactor is The D1/D2 heterodimer binds P680, chlorophylls that are the primary electron donor of PSII, and subsequent electron acceptors. It shares a non-heme iron and each subunit binds pheophytin, quinone, additional chlorophylls, carotenoids and lipids. D1 provides most of the ligands for the Mn4-Ca-O5 cluster of the oxygen-evolving complex (OEC). There is also a Cl(-1) ion associated with D1 and D2, which is required for oxygen evolution. The PSII complex binds additional chlorophylls, carotenoids and specific lipids.. In terms of processing, tyr-161 forms a radical intermediate that is referred to as redox-active TyrZ, YZ or Y-Z. Post-translationally, C-terminally processed by CtpA; processing is essential to allow assembly of the oxygen-evolving complex and thus photosynthetic growth.

It is found in the cellular thylakoid membrane. It catalyses the reaction 2 a plastoquinone + 4 hnu + 2 H2O = 2 a plastoquinol + O2. Photosystem II (PSII) is a light-driven water:plastoquinone oxidoreductase that uses light energy to abstract electrons from H(2)O, generating O(2) and a proton gradient subsequently used for ATP formation. It consists of a core antenna complex that captures photons, and an electron transfer chain that converts photonic excitation into a charge separation. The D1/D2 (PsbA/PsbD) reaction center heterodimer binds P680, the primary electron donor of PSII as well as several subsequent electron acceptors. The sequence is that of Photosystem II protein D1 from Synechocystis sp. (strain PCC 6714) (Aphanocapsa sp. (strain PCC 6714)).